The following is a 1067-amino-acid chain: DNA-directed RNA polymerase subunit beta (1067 aa).

The protein belongs to the RNA polymerase beta chain family. In plastids the minimal PEP RNA polymerase catalytic core is composed of four subunits: alpha, beta, beta', and beta''. When a (nuclear-encoded) sigma factor is associated with the core the holoenzyme is formed, which can initiate transcription.

It is found in the plastid. Its subcellular location is the chloroplast. It catalyses the reaction RNA(n) + a ribonucleoside 5'-triphosphate = RNA(n+1) + diphosphate. Functionally, DNA-dependent RNA polymerase catalyzes the transcription of DNA into RNA using the four ribonucleoside triphosphates as substrates. This Ipomoea purpurea (Common morning glory) protein is DNA-directed RNA polymerase subunit beta.